We begin with the raw amino-acid sequence, 222 residues long: RNA chaperone ProQ (222 aa).

Over residues 94–113 (EHADHAKQQLDESKAKAAEK) the composition is skewed to basic and acidic residues. A disordered region spans residues 94 to 171 (EHADHAKQQL…PAKLTDSDLQ (78 aa)). Basic residues predominate over residues 114 to 131 (RKAKLAQQPKRKDKRQFN). Basic and acidic residues predominate over residues 133-148 (PKGEKSANSDHADTKR). Positions 155-164 (NRPNTTPPAK) are enriched in low complexity.

The protein belongs to the ProQ family.

Its subcellular location is the cytoplasm. Its function is as follows. RNA chaperone with significant RNA binding, RNA strand exchange and RNA duplexing activities. In Alteromonas mediterranea (strain DSM 17117 / CIP 110805 / LMG 28347 / Deep ecotype), this protein is RNA chaperone ProQ.